The sequence spans 250 residues: UPF0014 membrane protein YjkA (250 aa).

The next 6 helical transmembrane spans lie at Y3–F23, I32–I52, H57–I77, F91–I111, Y117–L137, and L214–L234.

It belongs to the UPF0014 family.

The protein localises to the cell membrane. This Bacillus subtilis (strain 168) protein is UPF0014 membrane protein YjkA (yjkA).